A 63-amino-acid chain; its full sequence is uncharacterized protein (63 aa).

An N-terminal signal peptide occupies residues 1-21; the sequence is MNRALILTFVLFFALFAISSA.

This is an uncharacterized protein from Dictyostelium discoideum (Social amoeba).